An 896-amino-acid chain; its full sequence is Protein translocase subunit SecA (896 aa).

ATP-binding positions include glutamine 87, 105 to 109 (GEGKT), and aspartate 507. Positions 853–879 (ESLSENDEASETQTFRRQEKKIGRNDP) are disordered. Over residues 866–876 (TFRRQEKKIGR) the composition is skewed to basic and acidic residues. Zn(2+)-binding residues include cysteine 880, cysteine 882, cysteine 891, and histidine 892.

This sequence belongs to the SecA family. Monomer and homodimer. Part of the essential Sec protein translocation apparatus which comprises SecA, SecYEG and auxiliary proteins SecDF-YajC and YidC. Zn(2+) serves as cofactor.

Its subcellular location is the cell inner membrane. It is found in the cytoplasm. It catalyses the reaction ATP + H2O + cellular proteinSide 1 = ADP + phosphate + cellular proteinSide 2.. Functionally, part of the Sec protein translocase complex. Interacts with the SecYEG preprotein conducting channel. Has a central role in coupling the hydrolysis of ATP to the transfer of proteins into and across the cell membrane, serving both as a receptor for the preprotein-SecB complex and as an ATP-driven molecular motor driving the stepwise translocation of polypeptide chains across the membrane. In Legionella pneumophila subsp. pneumophila (strain Philadelphia 1 / ATCC 33152 / DSM 7513), this protein is Protein translocase subunit SecA.